The sequence spans 246 residues: Pyridoxine 5'-phosphate synthase (246 aa).

Asn8 and Arg19 together coordinate 3-amino-2-oxopropyl phosphate. Catalysis depends on His44, which acts as the Proton acceptor. 1-deoxy-D-xylulose 5-phosphate contacts are provided by Arg46 and His51. The Proton acceptor role is filled by Glu76. Residue Thr106 participates in 1-deoxy-D-xylulose 5-phosphate binding. His198 (proton donor) is an active-site residue. Residues Asp199 and 221–222 (GH) each bind 3-amino-2-oxopropyl phosphate.

The protein belongs to the PNP synthase family. As to quaternary structure, homooctamer; tetramer of dimers.

The protein localises to the cytoplasm. It catalyses the reaction 3-amino-2-oxopropyl phosphate + 1-deoxy-D-xylulose 5-phosphate = pyridoxine 5'-phosphate + phosphate + 2 H2O + H(+). Its pathway is cofactor biosynthesis; pyridoxine 5'-phosphate biosynthesis; pyridoxine 5'-phosphate from D-erythrose 4-phosphate: step 5/5. In terms of biological role, catalyzes the complicated ring closure reaction between the two acyclic compounds 1-deoxy-D-xylulose-5-phosphate (DXP) and 3-amino-2-oxopropyl phosphate (1-amino-acetone-3-phosphate or AAP) to form pyridoxine 5'-phosphate (PNP) and inorganic phosphate. In Brucella abortus (strain S19), this protein is Pyridoxine 5'-phosphate synthase.